Consider the following 438-residue polypeptide: UDP-N-acetylmuramoylalanine--D-glutamate ligase (438 aa).

105–111 (GSNGKTT) contacts ATP.

Belongs to the MurCDEF family.

It localises to the cytoplasm. It catalyses the reaction UDP-N-acetyl-alpha-D-muramoyl-L-alanine + D-glutamate + ATP = UDP-N-acetyl-alpha-D-muramoyl-L-alanyl-D-glutamate + ADP + phosphate + H(+). Its pathway is cell wall biogenesis; peptidoglycan biosynthesis. In terms of biological role, cell wall formation. Catalyzes the addition of glutamate to the nucleotide precursor UDP-N-acetylmuramoyl-L-alanine (UMA). In Oenococcus oeni (strain ATCC BAA-331 / PSU-1), this protein is UDP-N-acetylmuramoylalanine--D-glutamate ligase.